The primary structure comprises 166 residues: Regulatory protein RecX (166 aa).

This sequence belongs to the RecX family.

It is found in the cytoplasm. Its function is as follows. Modulates RecA activity. The sequence is that of Regulatory protein RecX from Escherichia fergusonii (strain ATCC 35469 / DSM 13698 / CCUG 18766 / IAM 14443 / JCM 21226 / LMG 7866 / NBRC 102419 / NCTC 12128 / CDC 0568-73).